A 146-amino-acid polypeptide reads, in one-letter code: Hemoglobin subunit beta (146 aa).

The 145-residue stretch at 2 to 146 (QWSAEEKQLI…VAHALARKYH (145 aa)) folds into the Globin domain. Residues H63 and H92 each coordinate heme b.

It belongs to the globin family. In terms of assembly, heterotetramer of two alpha chains and two beta chains. Red blood cells.

Its function is as follows. Involved in oxygen transport from the lung to the various peripheral tissues. The chain is Hemoglobin subunit beta (HBB) from Struthio camelus (Common ostrich).